Consider the following 709-residue polypeptide: Fatty acid oxidation complex subunit alpha (709 aa).

Positions 1-188 (MEKTFNLTRR…KMGLVNDVVP (188 aa)) are enoyl-CoA hydratase. Residues 308-709 (RKVKKAVILG…EMAAEKTRFF (402 aa)) are 3-hydroxyacyl-CoA dehydrogenase.

The protein in the N-terminal section; belongs to the enoyl-CoA hydratase/isomerase family. It in the central section; belongs to the 3-hydroxyacyl-CoA dehydrogenase family. In terms of assembly, heterotetramer of two alpha chains (FadJ) and two beta chains (FadI).

It is found in the cytoplasm. It carries out the reaction a (3S)-3-hydroxyacyl-CoA = a (2E)-enoyl-CoA + H2O. It catalyses the reaction a 4-saturated-(3S)-3-hydroxyacyl-CoA = a (3E)-enoyl-CoA + H2O. The catalysed reaction is a (3S)-3-hydroxyacyl-CoA + NAD(+) = a 3-oxoacyl-CoA + NADH + H(+). The enzyme catalyses (3S)-3-hydroxybutanoyl-CoA = (3R)-3-hydroxybutanoyl-CoA. Its pathway is lipid metabolism; fatty acid beta-oxidation. Catalyzes the formation of a hydroxyacyl-CoA by addition of water on enoyl-CoA. Also exhibits 3-hydroxyacyl-CoA epimerase and 3-hydroxyacyl-CoA dehydrogenase activities. This Shewanella sp. (strain MR-4) protein is Fatty acid oxidation complex subunit alpha.